Reading from the N-terminus, the 130-residue chain is MAKRKVVKKKVVKKNIAKGIVYISATFNNTMVTVTDEMGNAIAWSSAGGLGFKGSKKSTPYAAQQAVEDALNKAKEHGIKEVGIKVQGPGSGRETAVKSVGAMEGIKVTFLKDITPLAHNGCRPPKRRRV.

Belongs to the universal ribosomal protein uS11 family. Part of the 30S ribosomal subunit. Interacts with proteins S7 and S18. Binds to IF-3.

Functionally, located on the platform of the 30S subunit, it bridges several disparate RNA helices of the 16S rRNA. Forms part of the Shine-Dalgarno cleft in the 70S ribosome. This Campylobacter lari (strain RM2100 / D67 / ATCC BAA-1060) protein is Small ribosomal subunit protein uS11.